Consider the following 381-residue polypeptide: Chaperone protein DnaJ (381 aa).

Residues 4–69 (DYYEILGVTR…QKRAAYDRFG (66 aa)) form the J domain. The segment at 135–213 (GKTAQINIPS…CQGTRRVEKN (79 aa)) adopts a CR-type zinc-finger fold. Zn(2+) is bound by residues Cys148, Cys151, Cys165, Cys168, Cys187, Cys190, Cys201, and Cys204. CXXCXGXG motif repeat units lie at residues 148-155 (CDACEGSG), 165-172 (CGTCHGAG), 187-194 (CPVCHGRG), and 201-208 (CPKCQGTR).

The protein belongs to the DnaJ family. As to quaternary structure, homodimer. Zn(2+) serves as cofactor.

Its subcellular location is the cytoplasm. In terms of biological role, participates actively in the response to hyperosmotic and heat shock by preventing the aggregation of stress-denatured proteins and by disaggregating proteins, also in an autonomous, DnaK-independent fashion. Unfolded proteins bind initially to DnaJ; upon interaction with the DnaJ-bound protein, DnaK hydrolyzes its bound ATP, resulting in the formation of a stable complex. GrpE releases ADP from DnaK; ATP binding to DnaK triggers the release of the substrate protein, thus completing the reaction cycle. Several rounds of ATP-dependent interactions between DnaJ, DnaK and GrpE are required for fully efficient folding. Also involved, together with DnaK and GrpE, in the DNA replication of plasmids through activation of initiation proteins. The polypeptide is Chaperone protein DnaJ (Bartonella henselae (strain ATCC 49882 / DSM 28221 / CCUG 30454 / Houston 1) (Rochalimaea henselae)).